Reading from the N-terminus, the 308-residue chain is MTSKLEQLKQFTTVVADTGDIDAIARLKPVDATTNPSLLLKAAAMPRYAEHLGNAMKQCQGDIGLACDLFAVAVGKQILELIPGRISTEVDARLSFDTQAMVQRGERLIGLYEQAGISRERVLIKIASTWEGIRAAEQLEKAGIQTNLTLLFSFTQAVACAEAGVFLISPFVGRIYDWYKKHEGRDYQGAEDPGVQSVSRIYDYYKTHGYKTVVMGASFRNVGQIESLAGCDRLTISPELLGQLAEASGTLERKLEPGRASEPRISLDEKSFRWGLNEDAMATEKLAEGIRQFARDQEKLEALLTELA.

Lysine 125 acts as the Schiff-base intermediate with substrate in catalysis.

The protein belongs to the transaldolase family. Type 1 subfamily. In terms of assembly, homodimer.

It localises to the cytoplasm. It carries out the reaction D-sedoheptulose 7-phosphate + D-glyceraldehyde 3-phosphate = D-erythrose 4-phosphate + beta-D-fructose 6-phosphate. Its pathway is carbohydrate degradation; pentose phosphate pathway; D-glyceraldehyde 3-phosphate and beta-D-fructose 6-phosphate from D-ribose 5-phosphate and D-xylulose 5-phosphate (non-oxidative stage): step 2/3. Its function is as follows. Transaldolase is important for the balance of metabolites in the pentose-phosphate pathway. In Stutzerimonas stutzeri (strain A1501) (Pseudomonas stutzeri), this protein is Transaldolase.